Here is a 198-residue protein sequence, read N- to C-terminus: Peroxiredoxin-2 (198 aa).

Position 2 is an N-acetylalanine (Ala2). The Thioredoxin domain maps to 6 to 164 (AHIGKPAPDF…ALRLVQAFQY (159 aa)). Residue Cys51 is the Cysteine sulfenic acid (-SOH) intermediate of the active site. Ser112 bears the Phosphoserine mark. Position 182 is a phosphothreonine (Thr182). Position 196 is an N6-acetyllysine (Lys196).

This sequence belongs to the peroxiredoxin family. AhpC/Prx1 subfamily. As to quaternary structure, homodimer; disulfide-linked, upon oxidation. 5 homodimers assemble to form a ring-like decamer. Interacts with TIPIN. In terms of processing, the enzyme can be inactivated by further oxidation of the cysteine sulfenic acid (C(P)-SOH) to sulphinic acid (C(P)-SO2H) instead of its condensation to a disulfide bond. It can be reactivated by forming a transient disulfide bond with sulfiredoxin SRXN1, which reduces the cysteine sulfinic acid in an ATP- and Mg-dependent manner. Post-translationally, acetylation increases resistance to transition to high molecular-mass complexes. Deacetylated by HDAC6 which decreases reducing activity.

It is found in the cytoplasm. It catalyses the reaction a hydroperoxide + [thioredoxin]-dithiol = an alcohol + [thioredoxin]-disulfide + H2O. Functionally, thiol-specific peroxidase that catalyzes the reduction of hydrogen peroxide and organic hydroperoxides to water and alcohols, respectively. Plays a role in cell protection against oxidative stress by detoxifying peroxides and as sensor of hydrogen peroxide-mediated signaling events. Might participate in the signaling cascades of growth factors and tumor necrosis factor-alpha by regulating the intracellular concentrations of H(2)O(2). This is Peroxiredoxin-2 (Prdx2) from Rattus norvegicus (Rat).